The chain runs to 691 residues: Elongation factor G (691 aa).

Residues 10–284 (KMYRNIGIMA…AIVKYLPSPL (275 aa)) form the tr-type G domain. GTP-binding positions include 19–26 (AHIDAGKT), 83–87 (DTPGH), and 137–140 (NKMD).

The protein belongs to the TRAFAC class translation factor GTPase superfamily. Classic translation factor GTPase family. EF-G/EF-2 subfamily.

The protein resides in the cytoplasm. Catalyzes the GTP-dependent ribosomal translocation step during translation elongation. During this step, the ribosome changes from the pre-translocational (PRE) to the post-translocational (POST) state as the newly formed A-site-bound peptidyl-tRNA and P-site-bound deacylated tRNA move to the P and E sites, respectively. Catalyzes the coordinated movement of the two tRNA molecules, the mRNA and conformational changes in the ribosome. The chain is Elongation factor G from Clostridium tetani (strain Massachusetts / E88).